The following is a 581-amino-acid chain: Metal transporter Nramp7.1 (581 aa).

N11 and N19 each carry an N-linked (GlcNAc...) asparagine glycan. The next 7 membrane-spanning stretches (helical) occupy residues 57-77 (FLSY…PGNL), 90-110 (ELLW…SLAA), 146-166 (YCLW…EGII), 181-201 (LLIG…WVGV), 224-244 (LLIA…MSYV), 270-290 (IALL…ALVL), and 307-327 (YFLI…LAVI). The N-linked (GlcNAc...) asparagine glycan is linked to N338. A run of 5 helical transmembrane segments spans residues 370 to 390 (IYAI…TYAG), 409 to 429 (LVTR…GGSS), 434 to 454 (LIII…FALI), 473 to 493 (IYII…NIYY), and 513 to 533 (VFIG…VIYL). Residues 551–581 (PQQQANMENGLGPEMERVPYREDLADIPLPE) form a disordered region. The span at 564 to 574 (EMERVPYREDL) shows a compositional bias: basic and acidic residues.

It belongs to the NRAMP (TC 2.A.55) family.

The protein localises to the membrane. Functionally, probable divalent metal transporter. The sequence is that of Metal transporter Nramp7.1 from Populus trichocarpa (Western balsam poplar).